The primary structure comprises 430 residues: SH3 domain-containing protein PJ696.02 (430 aa).

Residues 237-372 are disordered; sequence EPEDIWGPSS…KPKFKQDSLG (136 aa). Positions 263-277 are enriched in basic and acidic residues; the sequence is RRGDSYRSNRSRAHD. Position 285 is a phosphoserine (serine 285). Residues 304 to 313 are compositionally biased toward basic and acidic residues; that stretch reads SKMDNRRSKY. Phosphothreonine is present on threonine 316. 2 positions are modified to phosphoserine: serine 318 and serine 324. A Phosphotyrosine modification is found at tyrosine 325. 3 positions are modified to phosphoserine: serine 326, serine 354, and serine 406. Over residues 333–358 the composition is skewed to low complexity; that stretch reads VYSSDVSTESSSQFSSRSSEYSKPSR. An SH3 domain is found at 371–430; it reads LGPNQARAMYSFAGEQPGDLSFQKGDIIDIVERSGSHDDWWTGRIGYREGIFPANYVKLS.

Belongs to the SH3YL1 family.

The polypeptide is SH3 domain-containing protein PJ696.02 (Schizosaccharomyces pombe (strain 972 / ATCC 24843) (Fission yeast)).